A 472-amino-acid polypeptide reads, in one-letter code: MPPTIHRNLLSPELVQWALKIEKDSRLTARGALAVMSYAKTGRSPLDKRIVDTDDVRENVDWGKVNMKLSEESFARVRKIAKEFLDTREHLFVVDCFAGHDERYRLKVRVFTTRPYHALFMRDMLIVPTPEELATFGEPDYVIYNAGECKADPSIPGLTSTTCVALNFKTREQVILGTEYAGEMKKGILTVMFELMPQMNHLCMHASANVGKQGDVTVFFGLSGTGKTTLSADPHRNLIGDDEHVWTDRGVFNIEGGCYAKAIGLNPKTEKDIYDAVRFGAVAENCVLDKRTGEIDFYDESICKNTRVAYPLSHIEGALSKAIAGHPKNVIFLTNDAFGVMPPVARLTSAQAMFWFVMGYTANVPGVEAGGTRTARPIFSSCFGGPFLVRHATFYGEQLAEKMQKHNSRVWLLNTGYAGGRADRGAKRMPLRVTRAIIDAIHDGTLDRTEYEEYPGWACTSRSTSPKCRSIC.

Residue 221–228 participates in ATP binding; that stretch reads GLSGTGKT.

The protein belongs to the phosphoenolpyruvate carboxykinase (ATP) family. In terms of assembly, homodimer.

Its subcellular location is the glycosome. It carries out the reaction oxaloacetate + ATP = phosphoenolpyruvate + ADP + CO2. It functions in the pathway carbohydrate biosynthesis; gluconeogenesis. The polypeptide is Phosphoenolpyruvate carboxykinase (ATP), glycosomal (PEPCK) (Trypanosoma cruzi).